Reading from the N-terminus, the 214-residue chain is Germin-like protein 9-3 (214 aa).

The signal sequence occupies residues 1–23 (MASSILLLVVLAVVSAPVALVMA). Residues Asn42, Asn60, and Asn69 are each glycosylated (N-linked (GlcNAc...) asparagine). Positions 59–202 (MNMSMPMPNA…SFKTDVPTIQ (144 aa)) constitute a Cupin type-1 domain. The Mn(2+) site is built by His104, His106, Glu111, and His150.

The protein belongs to the germin family. As to quaternary structure, oligomer (believed to be a pentamer but probably hexamer).

It localises to the secreted. Its subcellular location is the extracellular space. The protein resides in the apoplast. Its function is as follows. May play a role in plant defense. Probably has no oxalate oxidase activity even if the active site is conserved. In Oryza sativa subsp. japonica (Rice), this protein is Germin-like protein 9-3.